The primary structure comprises 142 residues: Salivary protein 15b (142 aa).

Positions 1 to 20 (MKYLGLALISAVFLIGTCQA) are cleaved as a signal peptide. Disulfide bonds link C27-C44, C40-C108, and C91-C117.

Belongs to the PBP/GOBP family. Female salivary gland.

The protein resides in the secreted. Inhibits contact coagulation pathway activation in the host by sequestering anionic polymers, such as dextran sulfate and heparin, and thus blocking interaction of protein components of the pathway with negatively charged surfaces. Inhibits dextran sulfate-mediated autoactivation of host coagulation factor XII (F12). Inhibits dextran sulfate-mediated activation of host factor XI (F11) by activated F12. Inhibits polyphosphate-induced plasma extravasation at the injection site in mouse model, probably via inhibition of bradykinin generation in host skin. This Phlebotomus duboscqi (Sandfly) protein is Salivary protein 15b.